The chain runs to 454 residues: MSEPEFQQAYEEVVSSLEDSTLFEQHPEYRKVLPIVSVPERIIQFRVTWENDKGEQEVAQGYRVQYNSAKGPYKGGLRFHPSVNLSILKFLGFEQIFKNSLTGLDMGGGKGGLCVDLKGRSNNEIRRICYAFMRELSRHIGQDTDVPAGDIGVGGREIGYLFGAYRSYKNSWEGVLTGKGLNWGGSLIRPEATGYGLVYYTQAMIDYATNGKESFEGKRVTISGSGNVAQYAALKVIELGGTVVSLSDSKGCIISETGITSEQVADISSAKVNFKSLEQIVNEYSTFSENKVQYIAGARPWTHVQKVDIALPCATQNEVSGEEAKALVAQGVKFIAEGSNMGSTPEAIAVFETARSTATGPSEAVWYGPPKAANLGGVAVSGLEMAQNSQRITWTSERVDQELKRIMINCFNECIDYAKKYTKDGKVLPSLVKGANIASFIKVSDAMFDQGDVF.

At S2 the chain carries N-acetylserine. K110 is an active-site residue. 174–203 (GVLTGKGLNWGGSLIRPEATGYGLVYYTQA) contributes to the NAD(+) binding site. Glycyl lysine isopeptide (Lys-Gly) (interchain with G-Cter in ubiquitin) cross-links involve residues K325, K371, and K433.

Belongs to the Glu/Leu/Phe/Val dehydrogenases family. As to quaternary structure, homohexamer.

The catalysed reaction is L-glutamate + NADP(+) + H2O = 2-oxoglutarate + NH4(+) + NADPH + H(+). Functionally, catalyzes the incorporation of an ammonium ion into alpha-ketoglutarate to form L-glutamate, the major route of assimilation of ammonia into an organic form in yeast. The sequence is that of NADP-specific glutamate dehydrogenase 1 from Saccharomyces cerevisiae (strain ATCC 204508 / S288c) (Baker's yeast).